Consider the following 324-residue polypeptide: Interleukin-12 subunit beta (324 aa).

The first 22 residues, 1-22 (MHLQQLVVSWFSLVWLASPIVA), serve as a signal peptide directing secretion. Residues 23-106 (IWELEKNVYV…LSQSLLLLHK (84 aa)) enclose the Ig-like C2-type domain. Cys-50 and Cys-90 form a disulfide bridge. N-linked (GlcNAc...) asparagine glycosylation is found at Asn-125, Asn-135, and Asn-218. The 92-residue stretch at 233 to 324 (PPKNLQLNPL…WSEWASVSCN (92 aa)) folds into the Fibronectin type-III domain.

The protein belongs to the IL-12B family. In terms of assembly, heterodimer with IL12A; disulfide-linked. The heterodimer is known as interleukin IL-12. Heterodimer with IL23A; disulfide-linked. The heterodimer is known as interleukin IL-23. Also secreted as a monomer. Interacts with NBR1; this interaction promotes IL-12 secretion.

The protein resides in the secreted. In terms of biological role, cytokine that can act as a growth factor for activated T and NK cells, enhance the lytic activity of NK/lymphokine-activated killer cells, and stimulate the production of IFN-gamma by resting PBMC. Its function is as follows. Associates with IL23A to form the IL-23 interleukin, a heterodimeric cytokine which functions in innate and adaptive immunity. IL-23 may constitute with IL-17 an acute response to infection in peripheral tissues. IL-23 binds to a heterodimeric receptor complex composed of IL12RB1 and IL23R, activates the Jak-Stat signaling cascade, stimulates memory rather than naive T-cells and promotes production of pro-inflammatory cytokines. IL-23 induces autoimmune inflammation and thus may be responsible for autoimmune inflammatory diseases and may be important for tumorigenesis. The protein is Interleukin-12 subunit beta (IL12B) of Sus scrofa (Pig).